Consider the following 340-residue polypeptide: Selenide, water dikinase (340 aa).

The active site involves Cys13. Residues Lys16 and 43–45 (ASD) contribute to the ATP site. A Mg(2+)-binding site is contributed by Asp46. ATP-binding positions include Asp63, Asp86, and 133–135 (GHS). Asp86 serves as a coordination point for Mg(2+). A Mg(2+)-binding site is contributed by Asp221.

This sequence belongs to the selenophosphate synthase 1 family. Class I subfamily. In terms of assembly, homodimer. It depends on Mg(2+) as a cofactor.

The enzyme catalyses hydrogenselenide + ATP + H2O = selenophosphate + AMP + phosphate + 2 H(+). Functionally, synthesizes selenophosphate from selenide and ATP. The chain is Selenide, water dikinase from Desulfitobacterium hafniense (strain Y51).